A 272-amino-acid chain; its full sequence is L-aminoadipate-semialdehyde dehydrogenase-phosphopantetheinyl transferase (272 aa).

This sequence belongs to the P-Pant transferase superfamily. AcpS family.

The enzyme catalyses apo-[ACP] + CoA = holo-[ACP] + adenosine 3',5'-bisphosphate + H(+). In terms of biological role, catalyzes the transfer of a 4'-phosphopantetheine moiety from coenzyme A to a serine residue of acceptor proteins, such as alpha-aminoadipate reductase. Necessary for alpha-aminoadipate reductase activity. The chain is L-aminoadipate-semialdehyde dehydrogenase-phosphopantetheinyl transferase from Saccharomyces cerevisiae (strain ATCC 204508 / S288c) (Baker's yeast).